Consider the following 312-residue polypeptide: Ornithine carbamoyltransferase (312 aa).

Residues 59–62 (STRT), Q86, R110, and 137–140 (HPCQ) each bind carbamoyl phosphate. L-ornithine contacts are provided by residues N167, D231, and 235–236 (SM). C271 and R299 together coordinate carbamoyl phosphate.

Belongs to the aspartate/ornithine carbamoyltransferase superfamily. OTCase family.

Its subcellular location is the cytoplasm. The catalysed reaction is carbamoyl phosphate + L-ornithine = L-citrulline + phosphate + H(+). Its pathway is amino-acid biosynthesis; L-arginine biosynthesis; L-arginine from L-ornithine and carbamoyl phosphate: step 1/3. In terms of biological role, reversibly catalyzes the transfer of the carbamoyl group from carbamoyl phosphate (CP) to the N(epsilon) atom of ornithine (ORN) to produce L-citrulline. The sequence is that of Ornithine carbamoyltransferase from Methanopyrus kandleri (strain AV19 / DSM 6324 / JCM 9639 / NBRC 100938).